The primary structure comprises 491 residues: UDP-N-acetylmuramoyl-L-alanyl-D-glutamate--2,6-diaminopimelate ligase (491 aa).

Ser-30 is a UDP-N-acetyl-alpha-D-muramoyl-L-alanyl-D-glutamate binding site. ATP is bound at residue 108–114 (GTNGKTT). Residues Asn-149, 150-151 (TT), Ser-177, Gln-183, and Arg-185 each bind UDP-N-acetyl-alpha-D-muramoyl-L-alanyl-D-glutamate. Lys-217 is subject to N6-carboxylysine. Meso-2,6-diaminopimelate contacts are provided by residues Arg-383, 407 to 410 (DNPR), Gly-458, and Glu-462. Residues 407–410 (DNPR) carry the Meso-diaminopimelate recognition motif motif.

Belongs to the MurCDEF family. MurE subfamily. Mg(2+) serves as cofactor. In terms of processing, carboxylation is probably crucial for Mg(2+) binding and, consequently, for the gamma-phosphate positioning of ATP.

Its subcellular location is the cytoplasm. The catalysed reaction is UDP-N-acetyl-alpha-D-muramoyl-L-alanyl-D-glutamate + meso-2,6-diaminopimelate + ATP = UDP-N-acetyl-alpha-D-muramoyl-L-alanyl-gamma-D-glutamyl-meso-2,6-diaminopimelate + ADP + phosphate + H(+). Its pathway is cell wall biogenesis; peptidoglycan biosynthesis. Catalyzes the addition of meso-diaminopimelic acid to the nucleotide precursor UDP-N-acetylmuramoyl-L-alanyl-D-glutamate (UMAG) in the biosynthesis of bacterial cell-wall peptidoglycan. This chain is UDP-N-acetylmuramoyl-L-alanyl-D-glutamate--2,6-diaminopimelate ligase, found in Listeria innocua serovar 6a (strain ATCC BAA-680 / CLIP 11262).